The primary structure comprises 270 residues: MLTRRIIPCLDVKAGRVVKGVKFLNHRDAGDPVALAAAYNAAGADELVFYDITASSDERAIMVEVVERTAAEVFIPLTVGGGLRSVEDMYRMLRAGADKVSLNTAAVYNPHLIAEGARRFGSQCIVLSVDAKRVNAPGEPPRWEVFTHTGANPRPTGLDAIEWIKRGIDLGAGEICINSMDADGARTGYDLELLQAITAISPVPVIASGGAGSPADMYRGIVEGGADAVLAASIFHFGDYSIADVKRYLAERGVPVRQTFGSEVGTSTGA.

Residues D11 and D130 contribute to the active site.

It belongs to the HisA/HisF family. Heterodimer of HisH and HisF.

It is found in the cytoplasm. It catalyses the reaction 5-[(5-phospho-1-deoxy-D-ribulos-1-ylimino)methylamino]-1-(5-phospho-beta-D-ribosyl)imidazole-4-carboxamide + L-glutamine = D-erythro-1-(imidazol-4-yl)glycerol 3-phosphate + 5-amino-1-(5-phospho-beta-D-ribosyl)imidazole-4-carboxamide + L-glutamate + H(+). Its pathway is amino-acid biosynthesis; L-histidine biosynthesis; L-histidine from 5-phospho-alpha-D-ribose 1-diphosphate: step 5/9. IGPS catalyzes the conversion of PRFAR and glutamine to IGP, AICAR and glutamate. The HisF subunit catalyzes the cyclization activity that produces IGP and AICAR from PRFAR using the ammonia provided by the HisH subunit. This is Imidazole glycerol phosphate synthase subunit HisF from Chloroflexus aggregans (strain MD-66 / DSM 9485).